A 504-amino-acid polypeptide reads, in one-letter code: ATP synthase subunit alpha (504 aa).

171 to 178 (GDRATGKT) lines the ATP pocket.

The protein belongs to the ATPase alpha/beta chains family. As to quaternary structure, F-type ATPases have 2 components, CF(1) - the catalytic core - and CF(0) - the membrane proton channel. CF(1) has five subunits: alpha(3), beta(3), gamma(1), delta(1), epsilon(1). CF(0) has three main subunits: a(1), b(2) and c(9-12). The alpha and beta chains form an alternating ring which encloses part of the gamma chain. CF(1) is attached to CF(0) by a central stalk formed by the gamma and epsilon chains, while a peripheral stalk is formed by the delta and b chains.

The protein localises to the cell inner membrane. The catalysed reaction is ATP + H2O + 4 H(+)(in) = ADP + phosphate + 5 H(+)(out). In terms of biological role, produces ATP from ADP in the presence of a proton gradient across the membrane. The alpha chain is a regulatory subunit. This is ATP synthase subunit alpha from Sulfurihydrogenibium sp. (strain YO3AOP1).